We begin with the raw amino-acid sequence, 696 residues long: Polyribonucleotide nucleotidyltransferase (696 aa).

D483 and D489 together coordinate Mg(2+). Residues 550-609 enclose the KH domain; the sequence is PRITTIWVKVDKIRDVIGSGGKNIRSVTEATGVSIDIDDTGKINIASTNKEACDLAIKMI. An S1 motif domain is found at 619–687; it reads GKLYMGTVKK…KQGKIKLSRK (69 aa).

Belongs to the polyribonucleotide nucleotidyltransferase family. Requires Mg(2+) as cofactor.

Its subcellular location is the cytoplasm. The catalysed reaction is RNA(n+1) + phosphate = RNA(n) + a ribonucleoside 5'-diphosphate. In terms of biological role, involved in mRNA degradation. Catalyzes the phosphorolysis of single-stranded polyribonucleotides processively in the 3'- to 5'-direction. This Geobacter sp. (strain M21) protein is Polyribonucleotide nucleotidyltransferase.